Here is a 132-residue protein sequence, read N- to C-terminus: Outer membrane protein assembly factor BamE (132 aa).

The first 16 residues, 1–16 (MQKLVLTLLVTSLLAG), serve as a signal peptide directing secretion. Cys17 carries the N-palmitoyl cysteine lipid modification. Cys17 is lipidated: S-diacylglycerol cysteine.

Belongs to the BamE family. As to quaternary structure, part of the Bam complex.

It is found in the cell outer membrane. Functionally, part of the outer membrane protein assembly complex, which is involved in assembly and insertion of beta-barrel proteins into the outer membrane. This Acinetobacter pittii (strain PHEA-2) protein is Outer membrane protein assembly factor BamE.